Here is a 269-residue protein sequence, read N- to C-terminus: 4-hydroxy-tetrahydrodipicolinate reductase (269 aa).

Residues G12 to M17, G102 to T104, and S126 to M129 contribute to the NAD(+) site. The active-site Proton donor/acceptor is the H159. Position 160 (H160) interacts with (S)-2,3,4,5-tetrahydrodipicolinate. The Proton donor role is filled by K163. Residue G169 to T170 participates in (S)-2,3,4,5-tetrahydrodipicolinate binding.

Belongs to the DapB family.

It is found in the cytoplasm. It carries out the reaction (S)-2,3,4,5-tetrahydrodipicolinate + NAD(+) + H2O = (2S,4S)-4-hydroxy-2,3,4,5-tetrahydrodipicolinate + NADH + H(+). The enzyme catalyses (S)-2,3,4,5-tetrahydrodipicolinate + NADP(+) + H2O = (2S,4S)-4-hydroxy-2,3,4,5-tetrahydrodipicolinate + NADPH + H(+). It functions in the pathway amino-acid biosynthesis; L-lysine biosynthesis via DAP pathway; (S)-tetrahydrodipicolinate from L-aspartate: step 4/4. Catalyzes the conversion of 4-hydroxy-tetrahydrodipicolinate (HTPA) to tetrahydrodipicolinate. The chain is 4-hydroxy-tetrahydrodipicolinate reductase from Leptospira borgpetersenii serovar Hardjo-bovis (strain JB197).